The primary structure comprises 112 residues: Protein NIM1-INTERACTING 3 (112 aa).

Disordered stretches follow at residues 1 to 20 (MDRDRKRVKMEKEDDEEEKM) and 77 to 112 (EKAANESSSASNEYDGSKEKQEGSETNVCLDLNLSL). 2 coiled-coil regions span residues 1–35 (MDRDRKRVKMEKEDDEEEKMEKLYTVLKNAREMRK) and 69–96 (NKAEANNIEKAANESSSASNEYDGSKEK). The segment covering 77–89 (EKAANESSSASNE) has biased composition (low complexity).

This sequence belongs to the NPR1-interactor family. Interacts with NPR1 C-terminal region.

Its subcellular location is the nucleus. This chain is Protein NIM1-INTERACTING 3, found in Arabidopsis thaliana (Mouse-ear cress).